The primary structure comprises 107 residues: Thiosulfate sulfurtransferase GlpE (107 aa).

The Rhodanese domain occupies 17–101 (AAGAARLVDI…GFEAWRREFP (85 aa)). The Cysteine persulfide intermediate role is filled by cysteine 65.

The protein belongs to the GlpE family.

The protein resides in the cytoplasm. The enzyme catalyses thiosulfate + hydrogen cyanide = thiocyanate + sulfite + 2 H(+). The catalysed reaction is thiosulfate + [thioredoxin]-dithiol = [thioredoxin]-disulfide + hydrogen sulfide + sulfite + 2 H(+). In terms of biological role, transferase that catalyzes the transfer of sulfur from thiosulfate to thiophilic acceptors such as cyanide or dithiols. May function in a CysM-independent thiosulfate assimilation pathway by catalyzing the conversion of thiosulfate to sulfite, which can then be used for L-cysteine biosynthesis. The chain is Thiosulfate sulfurtransferase GlpE from Aeromonas hydrophila subsp. hydrophila (strain ATCC 7966 / DSM 30187 / BCRC 13018 / CCUG 14551 / JCM 1027 / KCTC 2358 / NCIMB 9240 / NCTC 8049).